A 233-amino-acid polypeptide reads, in one-letter code: Ribonuclease 3 (233 aa).

Residues 5–127 (LERLCRKLGY…VIGAVYLDGG (123 aa)) form the RNase III domain. Residue Glu-40 coordinates Mg(2+). Residue Asp-44 is part of the active site. Mg(2+)-binding residues include Asp-113 and Glu-116. The active site involves Glu-116. A DRBM domain is found at 156–226 (DPKTRLQEYL…ATRALALLLA (71 aa)).

This sequence belongs to the ribonuclease III family. Homodimer. It depends on Mg(2+) as a cofactor.

The protein resides in the cytoplasm. The enzyme catalyses Endonucleolytic cleavage to 5'-phosphomonoester.. Its function is as follows. Digests double-stranded RNA. Involved in the processing of primary rRNA transcript to yield the immediate precursors to the large and small rRNAs (23S and 16S). Processes some mRNAs, and tRNAs when they are encoded in the rRNA operon. Processes pre-crRNA and tracrRNA of type II CRISPR loci if present in the organism. The protein is Ribonuclease 3 of Nitrosococcus oceani (strain ATCC 19707 / BCRC 17464 / JCM 30415 / NCIMB 11848 / C-107).